A 190-amino-acid polypeptide reads, in one-letter code: Probable nicotinate-nucleotide adenylyltransferase (190 aa).

This sequence belongs to the NadD family.

It carries out the reaction nicotinate beta-D-ribonucleotide + ATP + H(+) = deamido-NAD(+) + diphosphate. It functions in the pathway cofactor biosynthesis; NAD(+) biosynthesis; deamido-NAD(+) from nicotinate D-ribonucleotide: step 1/1. Functionally, catalyzes the reversible adenylation of nicotinate mononucleotide (NaMN) to nicotinic acid adenine dinucleotide (NaAD). This Myxococcus xanthus (strain DK1622) protein is Probable nicotinate-nucleotide adenylyltransferase.